Here is a 467-residue protein sequence, read N- to C-terminus: Microtubule-associated tyrosine carboxypeptidase 1 (467 aa).

A compositionally biased stretch (polar residues) spans methionine 1–tyrosine 10. Disordered regions lie at residues methionine 1–proline 40 and methionine 77–proline 111. Histidine 276 is a binding site for Zn(2+). Glutamate 277 serves as the catalytic Nucleophile. Histidine 281 and glutamate 312 together coordinate Zn(2+).

This sequence belongs to the peptidase MATCAP family. It depends on Zn(2+) as a cofactor.

The protein localises to the cytoplasm. Its subcellular location is the cytoskeleton. It catalyses the reaction C-terminal L-alpha-aminoacyl-L-glutamyl-L-glutamyl-L-tyrosyl-[tubulin] + H2O = C-terminal L-alpha-aminoacyl-L-glutamyl-L-glutamyl-[tubulin] + L-tyrosine. The catalysed reaction is C-terminal L-alpha-aminoacyl-L-glutamyl-L-glutamyl-L-phenylalanyl-[tubulin] + H2O = C-terminal L-alpha-aminoacyl-L-glutamyl-L-glutamyl-[tubulin] + L-phenylalanine. Its function is as follows. Tyrosine carboxypeptidase that removes the C-terminal tyrosine residue of alpha-tubulin, thereby regulating microtubule dynamics and function. Also able to remove the C-terminal phenylalanine residue of alpha-tubulin TUBA8. Recognizes adjacent tubulin dimers along the same protofilament. This is Microtubule-associated tyrosine carboxypeptidase 1 from Mus musculus (Mouse).